The primary structure comprises 336 residues: tRNA(Ile)-lysidine synthase (336 aa).

Residue S40–S45 coordinates ATP.

Belongs to the tRNA(Ile)-lysidine synthase family.

Its subcellular location is the cytoplasm. The enzyme catalyses cytidine(34) in tRNA(Ile2) + L-lysine + ATP = lysidine(34) in tRNA(Ile2) + AMP + diphosphate + H(+). Ligates lysine onto the cytidine present at position 34 of the AUA codon-specific tRNA(Ile) that contains the anticodon CAU, in an ATP-dependent manner. Cytidine is converted to lysidine, thus changing the amino acid specificity of the tRNA from methionine to isoleucine. In Prochlorococcus marinus subsp. pastoris (strain CCMP1986 / NIES-2087 / MED4), this protein is tRNA(Ile)-lysidine synthase.